Here is a 150-residue protein sequence, read N- to C-terminus: FAD synthase (150 aa).

ATP-binding positions include 16–17 (VF), 21–24 (HVGH), and Asp102.

This sequence belongs to the archaeal FAD synthase family. Homodimer. A divalent metal cation is required as a cofactor.

It carries out the reaction FMN + ATP + H(+) = FAD + diphosphate. It functions in the pathway cofactor biosynthesis; FAD biosynthesis; FAD from FMN: step 1/1. Functionally, catalyzes the transfer of the AMP portion of ATP to flavin mononucleotide (FMN) to produce flavin adenine dinucleotide (FAD) coenzyme. This is FAD synthase from Thermococcus onnurineus (strain NA1).